A 225-amino-acid polypeptide reads, in one-letter code: uncharacterized protein (225 aa).

This is an uncharacterized protein from Amsacta moorei entomopoxvirus (AmEPV).